The primary structure comprises 226 residues: Urease accessory protein UreF (226 aa).

The protein belongs to the UreF family. In terms of assembly, ureD, UreF and UreG form a complex that acts as a GTP-hydrolysis-dependent molecular chaperone, activating the urease apoprotein by helping to assemble the nickel containing metallocenter of UreC. The UreE protein probably delivers the nickel.

The protein resides in the cytoplasm. Required for maturation of urease via the functional incorporation of the urease nickel metallocenter. In Burkholderia cenocepacia (strain ATCC BAA-245 / DSM 16553 / LMG 16656 / NCTC 13227 / J2315 / CF5610) (Burkholderia cepacia (strain J2315)), this protein is Urease accessory protein UreF.